The following is a 339-amino-acid chain: Extracellular matrix protein-binding protein emp (339 aa).

An N-terminal signal peptide occupies residues 1 to 26 (MKKKLFVLTMSTLFATQLINSNHANA).

The protein localises to the cell surface. Adhesin that binds to the host cell extracellular matrix proteins fibronectin, fibrinogen, collagen, and vitronectin. This is Extracellular matrix protein-binding protein emp (emp) from Staphylococcus aureus (strain bovine RF122 / ET3-1).